The sequence spans 132 residues: Large ribosomal subunit protein bL17 (132 aa).

This sequence belongs to the bacterial ribosomal protein bL17 family. In terms of assembly, part of the 50S ribosomal subunit. Contacts protein L32.

This is Large ribosomal subunit protein bL17 from Anaplasma phagocytophilum (strain HZ).